We begin with the raw amino-acid sequence, 193 residues long: UPF0301 protein Bfl251 (193 aa).

This sequence belongs to the UPF0301 (AlgH) family.

This Blochmanniella floridana protein is UPF0301 protein Bfl251.